A 178-amino-acid chain; its full sequence is C-phycoerythrin class 2 subunit beta (178 aa).

Residues Cys50 and Cys61 each coordinate phycourobilin. (2R,3E)-phycoerythrobilin-binding residues include Cys82 and Cys159.

Belongs to the phycobiliprotein family. In terms of assembly, heterodimer of an alpha and a beta chain. In terms of processing, contains two covalently linked phycoerythrobilin chromophores and one covalently linked phycourobilin chromophore.

Its subcellular location is the cellular thylakoid membrane. In terms of biological role, light-harvesting photosynthetic bile pigment-protein from the phycobiliprotein complex. The protein is C-phycoerythrin class 2 subunit beta (mpeB) of Synechococcus sp. (strain WH8103).